Consider the following 145-residue polypeptide: Small ribosomal subunit protein eS19 (145 aa).

Lys-23 is modified (N6-acetyllysine). The residue at position 67 (Arg-67) is an Omega-N-methylarginine. Lys-111 and Lys-115 each carry N6-acetyllysine. Lys-143 carries the N6-succinyllysine modification.

This sequence belongs to the eukaryotic ribosomal protein eS19 family. As to quaternary structure, component of the small ribosomal subunit. Part of the small subunit (SSU) processome, composed of more than 70 proteins and the RNA chaperone small nucleolar RNA (snoRNA) U3. Interacts with RPS19BP1; the interaction is direct and mediates the integration of RPS19 in state post-A1. Interacts with RPS19BP1.

Its subcellular location is the cytoplasm. It is found in the nucleus. The protein localises to the nucleolus. In terms of biological role, component of the small ribosomal subunit. The ribosome is a large ribonucleoprotein complex responsible for the synthesis of proteins in the cell. Required for pre-rRNA processing and maturation of 40S ribosomal subunits. Part of the small subunit (SSU) processome, first precursor of the small eukaryotic ribosomal subunit. During the assembly of the SSU processome in the nucleolus, many ribosome biogenesis factors, an RNA chaperone and ribosomal proteins associate with the nascent pre-rRNA and work in concert to generate RNA folding, modifications, rearrangements and cleavage as well as targeted degradation of pre-ribosomal RNA by the RNA exosome. The chain is Small ribosomal subunit protein eS19 (RPS19) from Oryctolagus cuniculus (Rabbit).